The sequence spans 545 residues: Autoimmune regulator (545 aa).

One can recognise an HSR domain in the interval 1-105 (MATDAALRRL…ILDSFPKDVD (105 aa)). Short sequence motifs (LXXLL motif) lie at residues 7 to 11 (LRRLL) and 63 to 67 (LSWLL). Disordered regions lie at residues 101–178 (PKDV…LPLG) and 234–290 (SKFE…SDPQ). A compositionally biased stretch (pro residues) spans 116 to 128 (PAVPKALVPPPRL). Positions 140 to 152 (AAAPAALTPRGTA) are enriched in low complexity. The SAND domain maps to 181–280 (IQTMSASVQR…ARLGQQGSVP (100 aa)). 3 interaction with histone H3 not methylated at 'Lys-4' regions span residues 295 to 298 (NEDE), 304 to 312 (DGGELICCD), and 331 to 335 (PSGTW). The PHD-type 1 zinc finger occupies 296 to 343 (EDECAVCRDGGELICCDGCPRAFHLACLSPPLREIPSGTWRCSSCLQA). Positions 348 to 382 (VQPRAEEPRPQEPPVETPLPPGLRSAGEEVRGPPG) are disordered. Residues 358-368 (QEPPVETPLPP) are compositionally biased toward pro residues. The LXXLL motif 3 motif lies at 414-418 (LHPLL). The segment at 434 to 475 (CGVCGDGTDVLRCTHCAAAFHWRCHFPAGTSRPGTGLRCRSC) adopts a PHD-type 2 zinc-finger fold. Residues 489 to 508 (APSPARLAPGPAKDDTASHE) are disordered. The short motif at 516-520 (LESLL) is the LXXLL motif 4 element.

In terms of assembly, homodimer and homotetramer. Interacts with CREBBP. Interacts preferentially with histone H3 that is not methylated at 'Lys-4'. Binds with lower affinity to histone H3 that is monomethylated at 'Lys-4'. Trimethylation of histone H3 at 'Lys-4' or phosphorylation at 'Thr-3' abolish the interaction. Binds with lower affinity to histone H3 that is acetylated at 'Lys-4', or that is acetylated at 'Lys-9' or trimethylated at 'Lys-9'. Binds histone H3 that is dimethylated at 'Arg-2' with very low affinity. In terms of processing, phosphorylated. Phosphorylation could trigger oligomerization. Widely expressed. Expressed at higher level in thymus (medullary epithelial cells and monocyte-dendritic cells), pancreas, adrenal cortex and testis. Expressed at lower level in the spleen, fetal liver and lymph nodes. In secondary lymphoid organs, expressed in a discrete population of bone marrow-derived toleregenic antigen presenting cells (APCs) called extrathymic AIRE expressing cells (eTAC)(at protein level). Isoform 2 and isoform 3 seem to be less frequently expressed than isoform 1, if at all.

The protein resides in the nucleus. The protein localises to the cytoplasm. Functionally, transcription factor playing an essential role to promote self-tolerance in the thymus by regulating the expression of a wide array of self-antigens that have the commonality of being tissue-restricted in their expression pattern in the periphery, called tissue restricted antigens (TRA). Binds to G-doublets in an A/T-rich environment; the preferred motif is a tandem repeat of 5'-ATTGGTTA-3' combined with a 5'-TTATTA-3' box. Binds to nucleosomes. Binds to chromatin and interacts selectively with histone H3 that is not methylated at 'Lys-4', not phosphorylated at 'Thr-3' and not methylated at 'Arg-2'. Functions as a sensor of histone H3 modifications that are important for the epigenetic regulation of gene expression. Mainly expressed by medullary thymic epithelial cells (mTECs), induces the expression of thousands of tissue-restricted proteins, which are presented on major histocompatibility complex class I (MHC-I) and MHC-II molecules to developing T-cells percolating through the thymic medulla. Also induces self-tolerance through other mechanisms such as the regulation of the mTEC differentiation program. Controls the medullary accumulation of thymic dendritic cells and the development of regulatory T-cell through the regulation of XCL1 expression. Regulates the production of CCR4 and CCR7 ligands in medullary thymic epithelial cells and alters the coordinated maturation and migration of thymocytes. In thimic B-cells, allows the presentation of licensing-dependent endogenous self-anitgen for negative selection. In secondary lymphoid organs, induces functional inactivation of CD4(+) T-cells. Expressed by a distinct bone marrow-derived population, induces self-tolerance through a mechanism that does not require regulatory T-cells and is resitant to innate inflammatory stimuli. In Homo sapiens (Human), this protein is Autoimmune regulator (AIRE).